The following is a 630-amino-acid chain: Sodium-dependent serotonin transporter (630 aa).

Topologically, residues 1 to 87 are cytoplasmic; it reads METTALNSQK…ERETWGKKVD (87 aa). Tyr47 bears the Phosphotyrosine mark. A helical transmembrane segment spans residues 88–112; the sequence is FLLSVIGYAVDLGNIWRFPYVCYQN. Residues Gly94, Ala96, Val97, Asp98, and Asn101 each coordinate Na(+). Asp98 is a serotonin binding site. The Extracellular segment spans residues 113-115; sequence GGG. The chain crosses the membrane as a helical span at residues 116-135; sequence AFLLPYIIMAIFGGIPLFYM. The Cytoplasmic portion of the chain corresponds to 136 to 160; the sequence is ELALGQYHRNGCISIWRKICPIFKG. Tyr142 carries the phosphotyrosine modification. Residues 161-186 traverse the membrane as a helical segment; it reads IGYTICIIAFYIASYYNTIIAWALYY. The Extracellular portion of the chain corresponds to 187-252; the sequence is LISSFTDRLP…KGLQDVGGVS (66 aa). The cysteines at positions 200 and 209 are disulfide-linked. N-linked (GlcNAc...) asparagine glycosylation is found at Asn208 and Asn217. The helical transmembrane segment at 253–271 threads the bilayer; sequence WQLTLCIMLIFTIIYFSIW. Topologically, residues 272–277 are cytoplasmic; the sequence is KGVKTS. At Thr276 the chain carries Phosphothreonine. A helical transmembrane segment spans residues 278-297; the sequence is GKVVWVTATFPYIVLSVLLV. Residues 298–324 are Extracellular-facing; it reads RGATLPGAWKGVLFYLKPNWQKLLETG. The helical transmembrane segment at 325–347 threads the bilayer; it reads VWIDAAAQIFFSLGPGFGVLLAF. Ser336 provides a ligand contact to Na(+). Over 348–360 the chain is Cytoplasmic; the sequence is ASYNKFNNNCYQD. The helical transmembrane segment at 361 to 380 threads the bilayer; it reads ALVTSAVNCMTSFVSGFVIF. Asn368 is a Na(+) binding site. Over 381 to 421 the chain is Extracellular; that stretch reads TVLGYMAEMRSEDVSEVAKDAGPSLLFITYAEAIANMPAST. A helical membrane pass occupies residues 422 to 443; that stretch reads FFAIIFFLMLITLGLDSTFAGL. Na(+)-binding residues include Leu434, Asp437, and Ser438. A serotonin-binding site is contributed by Thr439. Residues 444–463 are Cytoplasmic-facing; the sequence is EGVITAVLDEFPHIWAKHRE. The helical transmembrane segment at 464–483 threads the bilayer; that stretch reads WFVLAVVITCFFGSLTTLTF. Over 484–494 the chain is Extracellular; that stretch reads GGAYVVKLLEE. Positions 494 and 495 each coordinate serotonin. A helical membrane pass occupies residues 495-516; sequence YATGPAVLTVVFIEAIAVSWFY. Residues 517–538 are Cytoplasmic-facing; that stretch reads GVTQFCSDVKEMLGFSPGWFWR. A helical membrane pass occupies residues 539–558; the sequence is ICWVAVSPVFLLFIICSFLM. 2 residues coordinate serotonin: Phe556 and Ser559. The Extracellular portion of the chain corresponds to 559-574; sequence SPPQLRLFQYSYPHWS. Residues 575–595 traverse the membrane as a helical segment; the sequence is VILGYCIGTSSVICIPTYITY. Residues 596–630 are Cytoplasmic-facing; it reads RLVTTPGTLKERIIKSITPETPTEIPCGDICLNAV. The interval 616–624 is interaction with RAB4A; that stretch reads TPTEIPCGD.

This sequence belongs to the sodium:neurotransmitter symporter (SNF) (TC 2.A.22) family. SLC6A4 subfamily. In terms of assembly, monomer or homooligomer. Interacts (via C-terminus) with SCAMP2; the interaction is direct and retains transporter molecules intracellularly. Interacts with filamentous actin and STX1A. Interacts (via the N-terminus) with STX1A (via the H3 domain); this interaction regulates SLC4A6 channel conductance. Interacts with SEC23A, SEC24C and PATJ. Interacts with NOS1; the interaction may diminish the cell surface localization of SERT in the brain and, correspondingly, reduce serotonin reuptake. Interacts with TGFB1I1. Interacts with ITGAV:ITGB3. Interacts (via C-terminus) with ITGB3; this interaction regulates SLC6A4 trafficking. Post-translationally, phosphorylation at Thr-276 increases 5-HT uptake and is required for cGMP-mediated SERT regulation. In terms of tissue distribution, expressed in the intestinal crypt epithelial cells (at protein level).

It is found in the cell membrane. The protein localises to the endomembrane system. The protein resides in the endosome membrane. It localises to the synapse. Its subcellular location is the cell junction. It is found in the focal adhesion. The protein localises to the cell projection. The protein resides in the neuron projection. It carries out the reaction serotonin(out) + K(+)(in) + Na(+)(out) + H(+)(in) = serotonin(in) + K(+)(out) + Na(+)(in) + H(+)(out). Serotonin transporter that cotransports serotonin with one Na(+) ion in exchange for one K(+) ion and possibly one proton in an overall electroneutral transport cycle. Transports serotonin across the plasma membrane from the extracellular compartment to the cytosol thus limiting serotonin intercellular signaling. Essential for serotonin homeostasis in the central nervous system. In the developing somatosensory cortex, acts in glutamatergic neurons to control serotonin uptake and its trophic functions accounting for proper spatial organization of cortical neurons and elaboration of sensory circuits. In the mature cortex, acts primarily in brainstem raphe neurons to mediate serotonin uptake from the synaptic cleft back into the pre-synaptic terminal thus terminating serotonin signaling at the synapse. Modulates mucosal serotonin levels in the gastrointestinal tract through uptake and clearance of serotonin in enterocytes. Required for enteric neurogenesis and gastrointestinal reflexes. Regulates blood serotonin levels by ensuring rapid high affinity uptake of serotonin from plasma to platelets, where it is further stored in dense granules via vesicular monoamine transporters and then released upon stimulation. Mechanistically, the transport cycle starts with an outward-open conformation having Na1(+) and Cl(-) sites occupied. The binding of a second extracellular Na2(+) ion and serotonin substrate leads to structural changes to outward-occluded to inward-occluded to inward-open, where the Na2(+) ion and serotonin are released into the cytosol. Binding of intracellular K(+) ion induces conformational transitions to inward-occluded to outward-open and completes the cycle by releasing K(+) possibly together with a proton bound to Asp-98 into the extracellular compartment. Na1(+) and Cl(-) ions remain bound throughout the transport cycle. Additionally, displays serotonin-induced channel-like conductance for monovalent cations, mainly Na(+) ions. The channel activity is uncoupled from the transport cycle and may contribute to the membrane resting potential or excitability. This is Sodium-dependent serotonin transporter (SLC6A4) from Cavia porcellus (Guinea pig).